The chain runs to 338 residues: Fructose-1,6-bisphosphatase 1 (338 aa).

At Ala2 the chain carries N-acetylalanine. Residues Val18–Gly22 and Thr28–Thr32 contribute to the AMP site. Residues Asp69 and Glu98 each coordinate Mg(2+). AMP is bound at residue Lys113–Tyr114. Residues Asp119, Leu121, and Asp122 each coordinate Mg(2+). Asp122 to Ser125 is a substrate binding site. Residue Arg141 coordinates AMP. Position 151 is an N6-succinyllysine (Lys151). Substrate is bound by residues Asn213–Tyr216, Arg244–Met249, Tyr265, and Lys275–Arg277. Phosphotyrosine occurs at positions 216, 245, and 265. Glu281 is a binding site for Mg(2+).

Belongs to the FBPase class 1 family. Homotetramer. It depends on Mg(2+) as a cofactor. As to expression, expressed in pancreatic islets.

It carries out the reaction beta-D-fructose 1,6-bisphosphate + H2O = beta-D-fructose 6-phosphate + phosphate. It functions in the pathway carbohydrate biosynthesis; gluconeogenesis. Subject to complex allosteric regulation. The enzyme can assume an active R-state, or an inactive T-state. Intermediate conformations may exist. AMP acts as an allosteric inhibitor. AMP binding affects the turnover of bound substrate and not the affinity for substrate. Fructose 2,6-bisphosphate acts as a competitive inhibitor. Fructose 2,6-bisphosphate and AMP have synergistic effects. Its function is as follows. Catalyzes the hydrolysis of fructose 1,6-bisphosphate to fructose 6-phosphate in the presence of divalent cations, acting as a rate-limiting enzyme in gluconeogenesis. Plays a role in regulating glucose sensing and insulin secretion of pancreatic beta-cells. Appears to modulate glycerol gluconeogenesis in liver. Important regulator of appetite and adiposity; increased expression of the protein in liver after nutrient excess increases circulating satiety hormones and reduces appetite-stimulating neuropeptides and thus seems to provide a feedback mechanism to limit weight gain. The protein is Fructose-1,6-bisphosphatase 1 (FBP1) of Homo sapiens (Human).